Here is an 86-residue protein sequence, read N- to C-terminus: Small ribosomal subunit protein bS20 (86 aa).

Residues 1-22 (MANIKSAKKRAVQSEKRRKHNA) are compositionally biased toward basic residues. The disordered stretch occupies residues 1–28 (MANIKSAKKRAVQSEKRRKHNASGRSMM).

The protein belongs to the bacterial ribosomal protein bS20 family.

In terms of biological role, binds directly to 16S ribosomal RNA. This chain is Small ribosomal subunit protein bS20, found in Serratia proteamaculans (strain 568).